A 312-amino-acid polypeptide reads, in one-letter code: Beta-ketoacyl-[acyl-carrier-protein] synthase III (312 aa).

Residues Cys-112 and His-237 contribute to the active site. Residues 238 to 242 form an ACP-binding region; it reads QANIR. Asn-267 is an active-site residue.

Belongs to the thiolase-like superfamily. FabH family. Homodimer.

Its subcellular location is the cytoplasm. It carries out the reaction (2S)-2-methylbutanoyl-CoA + malonyl-[ACP] + H(+) = (4S)-4-methyl-3-oxohexanoyl-[ACP] + CO2 + CoA. The enzyme catalyses 2-methylpropanoyl-CoA + malonyl-[ACP] + H(+) = 4-methyl-3-oxopentanoyl-[ACP] + CO2 + CoA. It catalyses the reaction 3-methylbutanoyl-CoA + malonyl-[ACP] + H(+) = 5-methyl-3-oxohexanoyl-[ACP] + CO2 + CoA. The catalysed reaction is malonyl-[ACP] + acetyl-CoA + H(+) = 3-oxobutanoyl-[ACP] + CO2 + CoA. It participates in lipid metabolism; fatty acid biosynthesis. Catalyzes the condensation reaction of fatty acid synthesis by the addition to an acyl acceptor of two carbons from malonyl-ACP. Catalyzes the first condensation reaction which initiates fatty acid synthesis and may therefore play a role in governing the total rate of fatty acid production. Possesses both acetoacetyl-ACP synthase and acetyl transacylase activities. Can use branched-chain acyl-CoAs, with a preference for 2-methylbutanoyl-CoA, the precursor of odd-numbered anteiso fatty acids, at 30 degrees Celsius, which is further increased at a low temperature. Shows weak activity with acetyl-CoA. The sequence is that of Beta-ketoacyl-[acyl-carrier-protein] synthase III from Listeria monocytogenes serotype 1/2a (strain 10403S).